Reading from the N-terminus, the 428-residue chain is Exodeoxyribonuclease 7 large subunit (428 aa).

It belongs to the XseA family. In terms of assembly, heterooligomer composed of large and small subunits.

It is found in the cytoplasm. It carries out the reaction Exonucleolytic cleavage in either 5'- to 3'- or 3'- to 5'-direction to yield nucleoside 5'-phosphates.. Its function is as follows. Bidirectionally degrades single-stranded DNA into large acid-insoluble oligonucleotides, which are then degraded further into small acid-soluble oligonucleotides. This chain is Exodeoxyribonuclease 7 large subunit, found in Mycobacterium leprae (strain TN).